Consider the following 247-residue polypeptide: Probable transcriptional regulatory protein PMT_1423 (247 aa).

The protein belongs to the TACO1 family.

The protein localises to the cytoplasm. The protein is Probable transcriptional regulatory protein PMT_1423 of Prochlorococcus marinus (strain MIT 9313).